Reading from the N-terminus, the 635-residue chain is MAGUK p55 subfamily member 4 (635 aa).

The span at 1 to 16 (MRQSDRGAELTNEDRA) shows a compositional bias: basic and acidic residues. The tract at residues 1–23 (MRQSDRGAELTNEDRALPTPPDP) is disordered. 2 consecutive L27 domains span residues 23–79 (PENG…EKKL) and 86–136 (AQIL…FEPL). Residues 153–234 (IVCLVKNQQP…TIMFKVIPVS (82 aa)) enclose the PDZ domain. The region spanning 241-311 (QKMVYVRAMI…PSNHLLKRKQ (71 aa)) is the SH3 domain. In terms of domain architecture, Guanylate kinase-like spans 426 to 615 (HRLIVLVGPS…ACGQLLSAIQ (190 aa)). Positions 567-622 (VDMKFKDEDLQEMEELAQKMESQFGQFFDHVIVNDNLQDACGQLLSAIQKAQEELQ) form a coiled coil.

It belongs to the MAGUK family. As to quaternary structure, may interact with GRIA2. Interacts with MPDZ. Forms a complex with CRB1 and PALS1. Interacts with FASLG. In terms of tissue distribution, detected in the retina (at protein level). Highly enriched in the retina where it is mainly expressed by rod photoreceptors; detected in the inner segment of the photoreceptor layer and in the outer nuclear layer. Also detected at much lower levels in pineal gland, cerebellum, cortex, hippocampus, olfactory bulb, heart, liver and spleen. Expressed in the CA1-CA3 regions of pyramidal cell layers and in the granule cell layer of dentate gyrus in the hippocampus. In the cerebellum, expressed in Purkinje cells and throughout the granule cell layer. In the olfactory bulb, expressed in mitral cells.

It is found in the cytoplasm. Functionally, may play a role in retinal photoreceptors development. In Mus musculus (Mouse), this protein is MAGUK p55 subfamily member 4 (Mpp4).